Reading from the N-terminus, the 63-residue chain is Large ribosomal subunit protein bL28 (63 aa).

Belongs to the bacterial ribosomal protein bL28 family.

This chain is Large ribosomal subunit protein bL28, found in Desulforudis audaxviator (strain MP104C).